Here is a 105-residue protein sequence, read N- to C-terminus: Nucleoid-associated protein Dred_0043 (105 aa).

This sequence belongs to the YbaB/EbfC family. In terms of assembly, homodimer.

It is found in the cytoplasm. It localises to the nucleoid. Its function is as follows. Binds to DNA and alters its conformation. May be involved in regulation of gene expression, nucleoid organization and DNA protection. The sequence is that of Nucleoid-associated protein Dred_0043 from Desulforamulus reducens (strain ATCC BAA-1160 / DSM 100696 / MI-1) (Desulfotomaculum reducens).